The sequence spans 331 residues: L-lactate dehydrogenase A chain (331 aa).

Residues 29 to 57 (GMVG…MEDK) and Arg98 each bind NAD(+). 3 residues coordinate substrate: Arg105, Asn137, and Arg168. An NAD(+)-binding site is contributed by Asn137. His192 (proton acceptor) is an active-site residue. Thr247 contacts substrate.

It belongs to the LDH/MDH superfamily. LDH family. In terms of assembly, homotetramer.

The protein localises to the cytoplasm. The catalysed reaction is (S)-lactate + NAD(+) = pyruvate + NADH + H(+). It functions in the pathway fermentation; pyruvate fermentation to lactate; (S)-lactate from pyruvate: step 1/1. Functionally, interconverts simultaneously and stereospecifically pyruvate and lactate with concomitant interconversion of NADH and NAD(+). This chain is L-lactate dehydrogenase A chain (ldha), found in Champsocephalus gunnari (Mackerel icefish).